The primary structure comprises 871 residues: Alanine--tRNA ligase (871 aa).

Residues His590, His594, Cys694, and His698 each contribute to the Zn(2+) site.

This sequence belongs to the class-II aminoacyl-tRNA synthetase family. It depends on Zn(2+) as a cofactor.

It localises to the cytoplasm. The catalysed reaction is tRNA(Ala) + L-alanine + ATP = L-alanyl-tRNA(Ala) + AMP + diphosphate. Catalyzes the attachment of alanine to tRNA(Ala) in a two-step reaction: alanine is first activated by ATP to form Ala-AMP and then transferred to the acceptor end of tRNA(Ala). Also edits incorrectly charged Ser-tRNA(Ala) and Gly-tRNA(Ala) via its editing domain. This is Alanine--tRNA ligase from Thermoplasma acidophilum (strain ATCC 25905 / DSM 1728 / JCM 9062 / NBRC 15155 / AMRC-C165).